A 388-amino-acid polypeptide reads, in one-letter code: Pepsin A-1 (388 aa).

An N-terminal signal peptide occupies residues 1-15 (MKWLLLLGLVALSEC). Propeptides (activation peptide) lie at residues 16–40 (IIYK…LLKD) and 41–62 (FLKK…APTL). Positions 76–385 (YFGTIGIGTP…DRANNQVGLA (310 aa)) constitute a Peptidase A1 domain. Aspartate 94 is an active-site residue. Cysteine 107 and cysteine 112 are oxidised to a cystine. At serine 130 the chain carries Phosphoserine. A disulfide bridge links cysteine 268 with cysteine 272. Aspartate 277 is an active-site residue. A disulfide bridge links cysteine 311 with cysteine 344.

Belongs to the peptidase A1 family. Post-translationally, each pepsinogen is converted to corresponding pepsin at pH 2.0 in part as a result of the release of a 47 AA activation segment and in part as a result of stepwise proteolytic cleavage via an intermediate form(s).

It localises to the secreted. It carries out the reaction Preferential cleavage: hydrophobic, preferably aromatic, residues in P1 and P1' positions. Cleaves 1-Phe-|-Val-2, 4-Gln-|-His-5, 13-Glu-|-Ala-14, 14-Ala-|-Leu-15, 15-Leu-|-Tyr-16, 16-Tyr-|-Leu-17, 23-Gly-|-Phe-24, 24-Phe-|-Phe-25 and 25-Phe-|-Tyr-26 bonds in the B chain of insulin.. Its function is as follows. Shows particularly broad specificity; although bonds involving phenylalanine and leucine are preferred, many others are also cleaved to some extent. The polypeptide is Pepsin A-1 (PGA) (Macaca fuscata fuscata (Japanese macaque)).